A 550-amino-acid polypeptide reads, in one-letter code: Putative golgin subfamily A member 6-like protein 19 (550 aa).

Pro residues predominate over residues 1-11; the sequence is MWPQPRLPPHP. Residues 1–77 are disordered; it reads MWPQPRLPPH…DSATGVYGEG (77 aa). The segment covering 51–62 has biased composition (polar residues); sequence NGSSPDTATSGG. The stretch at 157–405 forms a coiled coil; it reads SKVEQLQDET…QERLRQQDER (249 aa). The span at 467–480 shows a compositional bias: basic and acidic residues; it reads KELEKSGGAEEPRG. Residues 467–529 are disordered; the sequence is KELEKSGGAE…VGTGEAAGGA (63 aa). 2 stretches are compositionally biased toward low complexity: residues 484-499 and 517-529; these read AAAARPVPGAPVPQGA and GEAVGTGEAAGGA.

It belongs to the GOLGA6 family.

The protein is Putative golgin subfamily A member 6-like protein 19 (GOLGA6L19) of Homo sapiens (Human).